Consider the following 158-residue polypeptide: MPLYECVLIARSEITQQQVDTIADAVTAQVESESGAVKKREYWGLRNLAYRIKKNRKGHYVLLGLDAEPATISEMERQLGLNEDVLRFMTVRVEDIDEAPSAPLARRGEDRDRDRGFRGPKPAGRFDSGRRRGADDREEYRARDEYRSDRDEDQNEEN.

The disordered stretch occupies residues 98–158 (EAPSAPLARR…DRDEDQNEEN (61 aa)). 2 stretches are compositionally biased toward basic and acidic residues: residues 106 to 117 (RRGEDRDRDRGF) and 127 to 150 (DSGR…RSDR).

Belongs to the bacterial ribosomal protein bS6 family.

In terms of biological role, binds together with bS18 to 16S ribosomal RNA. The protein is Small ribosomal subunit protein bS6 of Acidiphilium cryptum (strain JF-5).